The following is a 128-amino-acid chain: Calcitonin gene-related peptide 1 (128 aa).

Positions 1–25 (MGFLKFSPFLVVSILLLYQACSLQA) are cleaved as a signal peptide. A propeptide spanning residues 26–80 (VPLRSILESSPGMATLSEEEVRLLAALVQDYMQMKARELEQEEEQEAEGSSVTAQ) is cleaved from the precursor. A disulfide bond links Cys-84 and Cys-89. Phe-119 bears the Phenylalanine amide mark. A propeptide spanning residues 125–128 (DLQA) is cleaved from the precursor.

This sequence belongs to the calcitonin family. As to expression, detected in nerve cells of cerebrum, hippocampus and pons/midbrain in newborns, and only in nerve cells of pons/midbrain in adult.

Its subcellular location is the secreted. CGRP1/CALCA is a peptide hormone that induces vasodilation mediated by the CALCRL-RAMP1 receptor complex. Dilates a variety of vessels including the coronary, cerebral and systemic vasculature. Its abundance in the CNS also points toward a neurotransmitter or neuromodulator role. It also elevates platelet cAMP. CGRP1 can also bind and activate CALCR-RAMP1 (AMYR1) receptor complex. The protein is Calcitonin gene-related peptide 1 of Mus musculus (Mouse).